A 195-amino-acid polypeptide reads, in one-letter code: MSRRNPCKFEIRGHCLNGRRCHYSHNYFEWPPHALLVRQNFMLNKILKSMDKSIDTLSEISGAAELDRTEEYALGIVGVLESYIGSINNITKQSACVAMSKLLIEINSDDIKKLRDNEEPNSPKIRVYNTVISYIESNRKNNKQTIHLLKRLPADVLKKTIKNTLDIHKSIIISNPKESTVNDQNDQTKNNDITG.

A C3H1-type zinc finger spans residues 1-28 (MSRRNPCKFEIRGHCLNGRRCHYSHNYF). The oligomerization stretch occupies residues 32–49 (PHALLVRQNFMLNKILKS). 2 positions are modified to phosphoserine; by host: S58 and S61. Positions 76–171 (IVGVLESYIG…KNTLDIHKSI (96 aa)) are globular core. Residues 126-163 (RVYNTVISYIESNRKNNKQTIHLLKRLPADVLKKTIKN) are binding to the phosphoprotein. A disordered region spans residues 172–194 (IISNPKESTVNDQNDQTKNNDIT).

It belongs to the pneumoviridae M2-1 protein family. As to quaternary structure, homotetramer. The homotetramer interacts with RNA. Interacts with the phosphoprotein (P); this interaction is required for protein M2-1 function, localization in host inclusion bodies. Formation of a complex host PP1/M2-1/P allows P to target host PP1 phosphatase to the M2-1 substrate. Interacts with the nucleoprotein (N). Interacts with the matrix protein (M); this interaction directs M localization to cytoplasmic inclusions comprising viral proteins L, N, P, and M2-1 and mediates M association with the nucleocapsid. Interacts with host RELA. Interacts with host PABPC1 (via C-terminus). In terms of processing, phosphorylated by host in infected cells. Only dephosphorylated M2-1 is competent for viral mRNA binding. Cyclic turnover of phosphorylation-dephosphorylation of M2-1 is required for efficient viral transcription.

It localises to the virion. It is found in the host cytoplasm. Its subcellular location is the host nucleus. Acts as a tetrameric transcription processivity factor that binds in a competitive manner to RNA and the phosphoprotein (P) to prevent premature termination during transcription. Transcription anti-terminator that enhances readthrough of intergenic junctions during viral transcription. Preferentially binds to poly(A)-rich sequences. Plays a role in the association of the matrix protein with the nucleocapsid, which initiates assembly and budding. Also, can activate host NF-kappa-B through association with host RELA. The polypeptide is Protein M2-1 (M2-1) (Human respiratory syncytial virus B (strain B1)).